A 328-amino-acid polypeptide reads, in one-letter code: Probable magnesium transporter NIPA6 (328 aa).

Topologically, residues 1-4 are extracellular; that stretch reads METD. A helical transmembrane segment spans residues 5–25; it reads NGKGLILAVASSVFIGSSFIL. Over 26-51 the chain is Cytoplasmic; sequence KKKGLKRAGAIGTRAGYGGYTYLLEP. A helical transmembrane segment spans residues 52–72; the sequence is LWWAGMVTMIVGEAANFVAYI. The Extracellular segment spans residues 73–76; the sequence is YAPA. A helical transmembrane segment spans residues 77–97; sequence VLVTPLGALSIIISAVLAHFL. The Cytoplasmic segment spans residues 98 to 104; that stretch reads LKEKLKK. A helical transmembrane segment spans residues 105–125; it reads MGVLGCVSCIVGSVVIVIHAP. Over 126-142 the chain is Extracellular; sequence KEQTPNSVEEIWNLATQ. A helical transmembrane segment spans residues 143–163; the sequence is PAFLIYVAITMSIVLALILHF. At 164-175 the chain is on the cytoplasmic side; it reads EPLCGQTNILVY. Residues 176 to 196 traverse the membrane as a helical segment; the sequence is IGICSLMGALTVMSIKAIGIA. Residues 197–209 are Extracellular-facing; that stretch reads IKLTMEGVSQIGY. The helical transmembrane segment at 210–230 threads the bilayer; that stretch reads PQTWLFVMVAVTCVVTQLIYL. The Cytoplasmic segment spans residues 231-240; that stretch reads NKALDTFNAA. The helical transmembrane segment at 241 to 261 threads the bilayer; it reads IVSPVYYVMFTTLTIVASAIM. Topologically, residues 262-269 are extracellular; that stretch reads FKDWSGQD. Residues 270-290 form a helical membrane-spanning segment; sequence AASVASELCGFITVLTGTMIL. Residues 291 to 328 are Cytoplasmic-facing; it reads HGTREEEQQQASSEHVRWYDSRKSMNEEHLVSLYSPEY.

Belongs to the NIPA (TC 2.A.7) family. In terms of assembly, homodimer.

It is found in the cell membrane. The protein resides in the early endosome. Its function is as follows. Acts as a Mg(2+) transporter. Can also transport other divalent cations such as Fe(2+), Sr(2+), Ba(2+), Mn(2+) and Co(2+) but to a much less extent than Mg(2+). In Arabidopsis thaliana (Mouse-ear cress), this protein is Probable magnesium transporter NIPA6.